The following is a 404-amino-acid chain: Cysteine desulfurase IscS (404 aa).

Pyridoxal 5'-phosphate is bound by residues 75–76, N155, Q183, and 203–205; these read AT and SAH. K206 bears the N6-(pyridoxal phosphate)lysine mark. T243 serves as a coordination point for pyridoxal 5'-phosphate. The active-site Cysteine persulfide intermediate is the C328. [2Fe-2S] cluster is bound at residue C328.

The protein belongs to the class-V pyridoxal-phosphate-dependent aminotransferase family. NifS/IscS subfamily. As to quaternary structure, homodimer. Forms a heterotetramer with IscU, interacts with other sulfur acceptors. Pyridoxal 5'-phosphate serves as cofactor.

The protein localises to the cytoplasm. It catalyses the reaction (sulfur carrier)-H + L-cysteine = (sulfur carrier)-SH + L-alanine. It participates in cofactor biosynthesis; iron-sulfur cluster biosynthesis. Master enzyme that delivers sulfur to a number of partners involved in Fe-S cluster assembly, tRNA modification or cofactor biosynthesis. Catalyzes the removal of elemental sulfur atoms from cysteine to produce alanine. Functions as a sulfur delivery protein for Fe-S cluster synthesis onto IscU, an Fe-S scaffold assembly protein, as well as other S acceptor proteins. The sequence is that of Cysteine desulfurase IscS from Vibrio cholerae serotype O1 (strain ATCC 39541 / Classical Ogawa 395 / O395).